The primary structure comprises 149 residues: Transcriptional repressor NrdR (149 aa).

The segment at 3-34 (CPFCSATDTKVIDSRLVADGHQVRRRRECVQC) is a zinc-finger region. The region spanning 49 to 139 (PRVVKQDGSR…VYRAFEDVSE (91 aa)) is the ATP-cone domain.

The protein belongs to the NrdR family. The cofactor is Zn(2+).

Functionally, negatively regulates transcription of bacterial ribonucleotide reductase nrd genes and operons by binding to NrdR-boxes. In Shewanella halifaxensis (strain HAW-EB4), this protein is Transcriptional repressor NrdR.